A 493-amino-acid polypeptide reads, in one-letter code: Glycerol kinase (493 aa).

Residue Thr-11 coordinates ADP. The ATP site is built by Thr-11, Thr-12, and Ser-13. Thr-11 is a sn-glycerol 3-phosphate binding site. Residue Arg-15 participates in ADP binding. Residues Arg-80, Glu-81, Tyr-132, and Asp-241 each contribute to the sn-glycerol 3-phosphate site. Residues Arg-80, Glu-81, Tyr-132, Asp-241, and Gln-242 each coordinate glycerol. ADP contacts are provided by Thr-263 and Gly-306. Residues Thr-263, Gly-306, Gln-310, and Gly-408 each contribute to the ATP site. Gly-408 lines the ADP pocket.

This sequence belongs to the FGGY kinase family.

The catalysed reaction is glycerol + ATP = sn-glycerol 3-phosphate + ADP + H(+). It participates in polyol metabolism; glycerol degradation via glycerol kinase pathway; sn-glycerol 3-phosphate from glycerol: step 1/1. With respect to regulation, inhibited by fructose 1,6-bisphosphate (FBP). Key enzyme in the regulation of glycerol uptake and metabolism. Catalyzes the phosphorylation of glycerol to yield sn-glycerol 3-phosphate. This chain is Glycerol kinase, found in Cereibacter sphaeroides (strain ATCC 17025 / ATH 2.4.3) (Rhodobacter sphaeroides).